The primary structure comprises 71 residues: Translation initiation factor IF-1 (71 aa).

Positions 1-71 (MSKDDLIQFT…LTKGRVIHRH (71 aa)) constitute an S1-like domain.

The protein belongs to the IF-1 family. In terms of assembly, component of the 30S ribosomal translation pre-initiation complex which assembles on the 30S ribosome in the order IF-2 and IF-3, IF-1 and N-formylmethionyl-tRNA(fMet); mRNA recruitment can occur at any time during PIC assembly.

The protein localises to the cytoplasm. Functionally, one of the essential components for the initiation of protein synthesis. Stabilizes the binding of IF-2 and IF-3 on the 30S subunit to which N-formylmethionyl-tRNA(fMet) subsequently binds. Helps modulate mRNA selection, yielding the 30S pre-initiation complex (PIC). Upon addition of the 50S ribosomal subunit IF-1, IF-2 and IF-3 are released leaving the mature 70S translation initiation complex. This is Translation initiation factor IF-1 from Rickettsia typhi (strain ATCC VR-144 / Wilmington).